Here is a 243-residue protein sequence, read N- to C-terminus: NADH-ubiquinone oxidoreductase chain 6 (243 aa).

The next 5 membrane-spanning stretches (helical) occupy residues 16-36 (ISSV…SVIV), 41-61 (IISV…LILL), 69-89 (AYLI…LMLI), 104-124 (IPLT…LLPY), and 201-221 (IWLF…IVII).

Belongs to the complex I subunit 6 family.

It localises to the mitochondrion membrane. It catalyses the reaction a ubiquinone + NADH + 5 H(+)(in) = a ubiquinol + NAD(+) + 4 H(+)(out). In terms of biological role, core subunit of the mitochondrial membrane respiratory chain NADH dehydrogenase (Complex I) that is believed to belong to the minimal assembly required for catalysis. Complex I functions in the transfer of electrons from NADH to the respiratory chain. The immediate electron acceptor for the enzyme is believed to be ubiquinone. The sequence is that of NADH-ubiquinone oxidoreductase chain 6 (ndh-6) from Neurospora crassa (strain ATCC 24698 / 74-OR23-1A / CBS 708.71 / DSM 1257 / FGSC 987).